The chain runs to 522 residues: DNA primase DnaG (522 aa).

One can recognise a Toprim domain in the interval 171 to 257 (DAIIILEGRA…CVEDLVQKEI (87 aa)). Mg(2+) contacts are provided by E177, D219, and D221.

Belongs to the archaeal DnaG primase family. As to quaternary structure, forms a ternary complex with MCM helicase and DNA. Component of the archaeal exosome complex. Mg(2+) is required as a cofactor.

It catalyses the reaction ssDNA + n NTP = ssDNA/pppN(pN)n-1 hybrid + (n-1) diphosphate.. In terms of biological role, RNA polymerase that catalyzes the synthesis of short RNA molecules used as primers for DNA polymerase during DNA replication. Also part of the exosome, which is a complex involved in RNA degradation. Acts as a poly(A)-binding protein that enhances the interaction between heteromeric, adenine-rich transcripts and the exosome. This is DNA primase DnaG from Methanosarcina mazei (strain ATCC BAA-159 / DSM 3647 / Goe1 / Go1 / JCM 11833 / OCM 88) (Methanosarcina frisia).